Here is a 488-residue protein sequence, read N- to C-terminus: Protein unzipped (488 aa).

A signal peptide spans 1-21; it reads MTSNSCLISLGLLLVLIQILA. Residues 22–465 are Extracellular-facing; the sequence is PAKAAEHSVF…DVALAGFGVN (444 aa). N-linked (GlcNAc...) asparagine glycans are attached at residues Asn-35, Asn-232, Asn-317, and Asn-374. Low complexity predominate over residues 380 to 400; the sequence is TTTTTTTTSTSTTTHATTTST. The segment at 380 to 453 is disordered; it reads TTTTTTTTST…EAPENMSSDP (74 aa). A glycan (N-linked (GlcNAc...) asparagine) is linked at Asn-448. The chain crosses the membrane as a helical span at residues 466–486; sequence AAGSTFIAGSALLTLLLTIFL. The Cytoplasmic portion of the chain corresponds to 487–488; that stretch reads SL.

Its subcellular location is the membrane. In terms of biological role, required for normal axon patterning during neurogenesis. The protein is Protein unzipped (uzip) of Drosophila melanogaster (Fruit fly).